Reading from the N-terminus, the 970-residue chain is Sodium/calcium exchanger 1 (970 aa).

The N-terminal stretch at 1-32 (MLRLRLSPTFSVGFHLLAFVPLLFSHVDLISA) is a signal peptide. The Extracellular segment spans residues 33 to 71 (DTEMEGEGNETGECTGSYYCKKGVILPIWEPQDPSFGDK). Asn41 is a glycosylation site (N-linked (GlcNAc...) asparagine). Residues 72-92 (IARATVYFVAMVYMFLGVSII) form a helical membrane-spanning segment. Residues 93 to 133 (ADRFMSSIEVITSQEKEITIKKPNGETTKTTVRIWNETVSN) lie on the Cytoplasmic side of the membrane. The chain crosses the membrane as a helical span at residues 134–154 (LTLMALGSSAPEILLSVIEVC). One copy of the Alpha-1 repeat lies at 138-178 (ALGSSAPEILLSVIEVCGHNFTAGDLGPSTIVGSAAFNMFI). At 155-167 (GHNFTAGDLGPST) the chain is on the extracellular side. Residue Asn157 is glycosylated (N-linked (GlcNAc...) asparagine). The helical transmembrane segment at 168-188 (IVGSAAFNMFIIIALCVYVVP) threads the bilayer. At 189-201 (DGETRKIKHLRVF) the chain is on the cytoplasmic side. Residues 202 to 222 (FVTAAWSIFAYTWLYIILSVI) traverse the membrane as a helical segment. Over 223-228 (SPGVVE) the chain is Extracellular. A helical transmembrane segment spans residues 229–249 (VWEGLLTFFFFPICVVFAWVA). At 250 to 797 (DRRLLFYKYV…FVPPTEYWNG (548 aa)) the chain is on the cytoplasmic side. Residues 251–270 (RRLLFYKYVYKRYRAGKQRG) form a putative calmodulin-binding region region. Phosphoserine occurs at positions 282 and 389. 2 Calx-beta domains span residues 393 to 493 (VNTE…VHLS) and 524 to 624 (ATVT…LEIG). Ca(2+) contacts are provided by Glu417, Asp453, Asp478, Asp479, Ile481, Glu483, Glu486, Asp530, Asp531, Asp532, Glu548, Asp584, Asp610, Glu611, Glu612, and Glu715. A helical transmembrane segment spans residues 798–818 (WACFIVSILMIGILTAFIGDL). The Extracellular segment spans residues 819 to 821 (ASH). Residues 822 to 842 (FGCTIGLKDSVTAVVFVALGT) form a helical membrane-spanning segment. The Alpha-2 repeat unit spans residues 839 to 875 (ALGTSVPDTFASKVAATQDQYADASIGNVTGSNAVNV). The Cytoplasmic portion of the chain corresponds to 843 to 871 (SVPDTFASKVAATQDQYADASIGNVTGSN). A helical membrane pass occupies residues 872–892 (AVNVFLGIGVAWSIAAIYHAA). Topologically, residues 893-903 (NGEQFKVSPGT) are extracellular. A helical membrane pass occupies residues 904–924 (LAFSVTLFTIFAFINVGVLLY). Residues 925–941 (RRRPEIGGELGGPRTAK) are Cytoplasmic-facing. The helical transmembrane segment at 942–962 (LLTSCLFVLLWLLYIFFSSLE) threads the bilayer. Over 963–970 (AYCHIKGF) the chain is Extracellular.

The protein belongs to the Ca(2+):cation antiporter (CaCA) (TC 2.A.19) family. SLC8 subfamily. Detected in heart (at protein level). Detected in heart.

The protein resides in the cell membrane. The enzyme catalyses Ca(2+)(in) + 3 Na(+)(out) = Ca(2+)(out) + 3 Na(+)(in). Its activity is regulated as follows. Activated by micromolar levels of Ca(2+). In terms of biological role, mediates the exchange of one Ca(2+) ion against three to four Na(+) ions across the cell membrane, and thereby contributes to the regulation of cytoplasmic Ca(2+) levels and Ca(2+)-dependent cellular processes. Contributes to Ca(2+) transport during excitation-contraction coupling in muscle. In a first phase, voltage-gated channels mediate the rapid increase of cytoplasmic Ca(2+) levels due to release of Ca(2+) stores from the endoplasmic reticulum. SLC8A1 mediates the export of Ca(2+) from the cell during the next phase, so that cytoplasmic Ca(2+) levels rapidly return to baseline. Required for normal embryonic heart development and the onset of heart contractions. The polypeptide is Sodium/calcium exchanger 1 (SLC8A1) (Felis catus (Cat)).